The following is a 188-amino-acid chain: Crossover junction endodeoxyribonuclease RuvC (188 aa).

Residues aspartate 7, glutamate 68, and aspartate 141 contribute to the active site. Residues aspartate 7, glutamate 68, and aspartate 141 each coordinate Mg(2+).

Belongs to the RuvC family. Homodimer which binds Holliday junction (HJ) DNA. The HJ becomes 2-fold symmetrical on binding to RuvC with unstacked arms; it has a different conformation from HJ DNA in complex with RuvA. In the full resolvosome a probable DNA-RuvA(4)-RuvB(12)-RuvC(2) complex forms which resolves the HJ. The cofactor is Mg(2+).

Its subcellular location is the cytoplasm. The catalysed reaction is Endonucleolytic cleavage at a junction such as a reciprocal single-stranded crossover between two homologous DNA duplexes (Holliday junction).. Functionally, the RuvA-RuvB-RuvC complex processes Holliday junction (HJ) DNA during genetic recombination and DNA repair. Endonuclease that resolves HJ intermediates. Cleaves cruciform DNA by making single-stranded nicks across the HJ at symmetrical positions within the homologous arms, yielding a 5'-phosphate and a 3'-hydroxyl group; requires a central core of homology in the junction. The consensus cleavage sequence is 5'-(A/T)TT(C/G)-3'. Cleavage occurs on the 3'-side of the TT dinucleotide at the point of strand exchange. HJ branch migration catalyzed by RuvA-RuvB allows RuvC to scan DNA until it finds its consensus sequence, where it cleaves and resolves the cruciform DNA. The polypeptide is Crossover junction endodeoxyribonuclease RuvC (Mycobacterium tuberculosis (strain ATCC 25177 / H37Ra)).